The chain runs to 250 residues: 2,3-bisphosphoglycerate-dependent phosphoglycerate mutase (250 aa).

Substrate is bound by residues 8-15 (RHGESEWN), 21-22 (TG), Arg60, 87-90 (ERHY), Lys98, 114-115 (RR), and 183-184 (GN). His9 serves as the catalytic Tele-phosphohistidine intermediate. Glu87 (proton donor/acceptor) is an active-site residue.

Belongs to the phosphoglycerate mutase family. BPG-dependent PGAM subfamily.

It catalyses the reaction (2R)-2-phosphoglycerate = (2R)-3-phosphoglycerate. It functions in the pathway carbohydrate degradation; glycolysis; pyruvate from D-glyceraldehyde 3-phosphate: step 3/5. Catalyzes the interconversion of 2-phosphoglycerate and 3-phosphoglycerate. This Borrelia duttonii (strain Ly) protein is 2,3-bisphosphoglycerate-dependent phosphoglycerate mutase.